A 445-amino-acid polypeptide reads, in one-letter code: Disintegrin and metalloproteinase domain-containing protein 18 (445 aa).

One can recognise a Peptidase M12B domain in the interval 1-106; sequence IYRKHLKYIG…LDMQCLGDLS (106 aa). Over 1 to 409 the chain is Extracellular; that stretch reads IYRKHLKYIG…TKRLSQHADS (409 aa). 3 disulfides stabilise this stretch: Cys-18–Cys-101, Cys-60–Cys-85, and Cys-62–Cys-67. Residues Asn-19 and Asn-59 are each glycosylated (N-linked (GlcNAc...) asparagine). N-linked (GlcNAc...) asparagine glycans are attached at residues Asn-84 and Asn-131. Positions 113–202 constitute a Disintegrin domain; that stretch reads QSVCGNGIVE…HCVPDTFALD (90 aa). Cysteines 173 and 194 form a disulfide. N-linked (GlcNAc...) asparagine glycosylation is found at Asn-333 and Asn-340. An EGF-like domain is found at 342–376; that stretch reads TGNDCNAAKKCKGNGICNNFGHCQCFPDYRPPDCN. 3 cysteine pairs are disulfide-bonded: Cys-346–Cys-358, Cys-352–Cys-364, and Cys-366–Cys-375. A helical transmembrane segment spans residues 410–430; that stretch reads WVILGFFIFLPFIMTLFLGII. The Cytoplasmic portion of the chain corresponds to 431 to 445; sequence KRNERKIVPQKEQER.

In terms of processing, the prodomain and the metalloprotease-like domain are cleaved during the epididymal maturation of the spermatozoa. In terms of tissue distribution, expressed specifically in testis.

The protein localises to the membrane. Functionally, sperm surface membrane protein that may be involved in spermatogenesis and fertilization. This is a non catalytic metalloprotease-like protein. The sequence is that of Disintegrin and metalloproteinase domain-containing protein 18 (Adam18) from Rattus norvegicus (Rat).